Consider the following 445-residue polypeptide: Methionine aminopeptidase 2 (445 aa).

The disordered stretch occupies residues 1 to 76; sequence MAAQVASGVG…KKKCTSKVQT (76 aa). Residues 57-71 show a composition bias toward basic residues; the sequence is AKKKKKKTKKKKKCT. A substrate-binding site is contributed by histidine 195. 3 residues coordinate a divalent metal cation: aspartate 215, aspartate 226, and histidine 295. Histidine 303 contributes to the substrate binding site. A divalent metal cation is bound by residues glutamate 331 and glutamate 426.

It belongs to the peptidase M24A family. Methionine aminopeptidase eukaryotic type 2 subfamily. Requires Co(2+) as cofactor. It depends on Zn(2+) as a cofactor. Mn(2+) serves as cofactor. Fe(2+) is required as a cofactor.

It is found in the cytoplasm. It carries out the reaction Release of N-terminal amino acids, preferentially methionine, from peptides and arylamides.. Functionally, cotranslationally removes the N-terminal methionine from nascent proteins. The N-terminal methionine is often cleaved when the second residue in the primary sequence is small and uncharged (Met-Ala-, Cys, Gly, Pro, Ser, Thr, or Val). The chain is Methionine aminopeptidase 2 from Paracoccidioides lutzii (strain ATCC MYA-826 / Pb01) (Paracoccidioides brasiliensis).